The chain runs to 740 residues: MLFLPILILNLLIITHAIDIIPREVLFQDPKYSSVSLSPDAKQVGYVAPDENGIRNVFTRCSSCSYSRQVTFETEHPILNYVWTAIPDVILFTQDNHGDENTRIYKKNISATAIAADKTQRVVISEKPMVKAMILSNNLISETVLIGMNDENPALHNIYAFNCQTDELKLVLQNRRFSIFFFDNDLNVRLASEEGPDGEMIYYRPRSNEGARTTEQNTWVEYLRIQHDDKAITMPITFDKSNNFMYWIMGDGSDLGNLVVFPFEDPQQKEILYTAQRAQIGNVLIHPTDKTLLAVTEVYHKPELFVANETFMEDLQYLVNMKPSGSMNIVSMSIDMSTWLVTYSSSDEPYDIYLYRRWNKKAELFMSTRPELKKYTLNKQIGFDFRARDEMTIQAYLSLPPQAPLLKSSQVPDGDRPYANLGMIPAVPQKMIVLVHGGPKARDHYGFSPMNAWLTNRGYSVLQVNFRGSTGFGKRLTNAGNGEWGRKMHFDILDAVEFAVSKGIANRSEVAVMGGSYGGYETLVALTFTPQTFACGVDIVGPSNLISLVQAIPPYWLGFRKDLIKMVGADISDEEGRQSLQSRSPLFFADRVTKPIMIIQGANDPRVKQAESDQFVAALEKKHIPVTYLLYPDEGHGVRKPQNSMEQHGHIETFLQQCLGGETQPFQPGQYNSSAIIKKIGIEGAAIARQNLQIAQNQFAQQLPRGPVAPSIFYRPPVRAQRVMLAPNQNVMNRIFPVQG.

Residue methionine 1 is a topological domain, cytoplasmic. Residues leucine 2–proline 22 form a helical; Signal-anchor for type II membrane protein membrane-spanning segment. At arginine 23–glycine 740 the chain is on the lumenal side. N-linked (GlcNAc...) asparagine glycosylation is found at asparagine 108, asparagine 308, and asparagine 506. Residues serine 516, aspartate 604, and histidine 636 each act as charge relay system in the active site. Cysteines 535 and 658 form a disulfide. Asparagine 672 is a glycosylation site (N-linked (GlcNAc...) asparagine).

The protein belongs to the peptidase S9B family. DPPIV subfamily.

The protein resides in the cell membrane. In terms of biological role, removes N-terminal dipeptides sequentially from polypeptides. Essential for control of distal tip cell migration. The protein is Dipeptidyl peptidase family member 6 (dpf-6) of Caenorhabditis elegans.